A 369-amino-acid polypeptide reads, in one-letter code: Pyrimidine monooxygenase RutA (369 aa).

Residues I49–K50, N115, E124, R140–Y141, and S190 contribute to the FMN site.

Belongs to the NtaA/SnaA/DszA monooxygenase family. RutA subfamily.

It catalyses the reaction uracil + FMNH2 + NADH + O2 = (Z)-3-ureidoacrylate + FMN + NAD(+) + H2O + H(+). The catalysed reaction is thymine + FMNH2 + NADH + O2 = (Z)-2-methylureidoacrylate + FMN + NAD(+) + H2O + H(+). In terms of biological role, catalyzes the pyrimidine ring opening between N-3 and C-4 by an unusual flavin hydroperoxide-catalyzed mechanism, adding oxygen atoms in the process to yield ureidoacrylate peracid, that immediately reacts with FMN forming ureidoacrylate and FMN-N(5)-oxide. The FMN-N(5)-oxide reacts spontaneously with NADH to produce FMN. Requires the flavin reductase RutF to regenerate FMN in vivo. In Acinetobacter baylyi (strain ATCC 33305 / BD413 / ADP1), this protein is Pyrimidine monooxygenase RutA.